A 61-amino-acid polypeptide reads, in one-letter code: Small ribosomal subunit protein uS14B (61 aa).

Zn(2+)-binding residues include cysteine 24, cysteine 27, cysteine 40, and cysteine 43.

This sequence belongs to the universal ribosomal protein uS14 family. Zinc-binding uS14 subfamily. Part of the 30S ribosomal subunit. Contacts proteins S3 and S10. The cofactor is Zn(2+).

Binds 16S rRNA, required for the assembly of 30S particles and may also be responsible for determining the conformation of the 16S rRNA at the A site. The chain is Small ribosomal subunit protein uS14B from Streptococcus pyogenes serotype M6 (strain ATCC BAA-946 / MGAS10394).